The following is a 347-amino-acid chain: Protein NDL3 (347 aa).

This sequence belongs to the NDRG family. As to quaternary structure, interacts with the heterodimers formed by GB1 and GG1, or GB1 and GG2. Interacts with RGS1.

It localises to the cytoplasm. Involved in a signaling pathway that modulates root auxin transport and auxin gradients. Acts partially by positively regulating the auxin carrier PIN2 and AUX1. Acts, together with GB1 as positive regulator of meristem initiation and branching. GB1 and NDL3 positively regulate basipetal inflorescence auxin transport and modulate MAX2 expression in shoots, which regulates organ and lateral meristem formation by the establishment and maintenance of auxin gradients. This Arabidopsis thaliana (Mouse-ear cress) protein is Protein NDL3.